The sequence spans 265 residues: MVNLTSTELERYRRQIILPGFGQEAQQRLKSATVLVTGVGGLGGTAALYLAIAGVGRLILVRGGELRLDDMNRQILMSDDWVGKPRVFKAKKRLEDINPDVEVEAIFDYVTPDNVDSLIQSADVALDCAHNFGERDLLNAACVRWRKPMVEAAMDGMDAYLTTIIPGVTPCLSCLFPEKPEWDRRGFGVLGAVSGTLACLTALEAMKLITGFSQPLSSELLTMNLHQLTFAKRRSYRDRNCPVCGTHSQHYPHPQQLSRVLVNSQ.

This sequence belongs to the HesA/MoeB/ThiF family.

This chain is Protein HesA, vegetative (hesA2), found in Trichormus variabilis (strain ATCC 29413 / PCC 7937) (Anabaena variabilis).